We begin with the raw amino-acid sequence, 343 residues long: L-threonine 3-dehydrogenase (343 aa).

Cys40 is a Zn(2+) binding site. Catalysis depends on charge relay system residues Thr42 and His45. Zn(2+)-binding residues include His65, Glu66, Cys95, Cys98, Cys101, and Cys109. NAD(+)-binding positions include Ile177, Asp197, Arg202, 264-266, and 288-289; these read LGI and IY.

Belongs to the zinc-containing alcohol dehydrogenase family. As to quaternary structure, homotetramer. Zn(2+) is required as a cofactor.

The protein localises to the cytoplasm. It carries out the reaction L-threonine + NAD(+) = (2S)-2-amino-3-oxobutanoate + NADH + H(+). It participates in amino-acid degradation; L-threonine degradation via oxydo-reductase pathway; glycine from L-threonine: step 1/2. Functionally, catalyzes the NAD(+)-dependent oxidation of L-threonine to 2-amino-3-ketobutyrate. The sequence is that of L-threonine 3-dehydrogenase from Aliivibrio salmonicida (strain LFI1238) (Vibrio salmonicida (strain LFI1238)).